We begin with the raw amino-acid sequence, 570 residues long: NADPH oxidase 2 (570 aa).

Over 2-9 the chain is Cytoplasmic; sequence GNWAVNEG. Residues 10-36 form a helical membrane-spanning segment; the sequence is LSIFVILVWLGLNVFLFINYYKVYDDG. Residues 37 to 46 are Extracellular-facing; that stretch reads PKYNYTRKLL. Asn-40 is a glycosylation site (N-linked (GlcNAc...) asparagine). The helical transmembrane segment at 47–72 threads the bilayer; sequence GSALALARAPAACLNFNCMLILLPVC. One can recognise a Ferric oxidoreductase domain in the interval 54-286; sequence RAPAACLNFN…MFLYLCERLV (233 aa). The Cytoplasmic portion of the chain corresponds to 73-95; sequence RNLLSFLRGSSACCSTRIRRQLD. The helical transmembrane segment at 96–130 threads the bilayer; sequence RNLTFHKMVAWMIALHTAIHTIAHLFNVEWCVNAR. The heme b site is built by His-101 and His-115. Residues 131–163 lie on the Extracellular side of the membrane; that stretch reads VGISDRYSIALSDIGDNENEEYLNFAREKIKNP. Residues Lys-159 and Lys-161 each participate in a glycyl lysine isopeptide (Lys-Gly) (interchain with G-Cter in ubiquitin) cross-link. A helical transmembrane segment spans residues 164-194; the sequence is EGGLYVAVTRLAGITGIVITLCLILIITSST. Over 195–203 the chain is Cytoplasmic; that stretch reads KTIRRSYFE. FAD-binding residues include Arg-199 and Ser-200. Residues 204 to 222 traverse the membrane as a helical segment; the sequence is VFWYTHHLFVIFFIGLAIH. Residues Trp-206, His-209, His-222, Arg-226, and Ile-227 each contribute to the heme b site. Topologically, residues 223 to 267 are extracellular; that stretch reads GAERIVRGQTAESLEEHNLDICADKIEEWGKIKECPVPKFAGNPP. Lys-255 is covalently cross-linked (Glycyl lysine isopeptide (Lys-Gly) (interchain with G-Cter in ubiquitin)). Heme b contacts are provided by Met-268, Tyr-280, and Arg-287. Residues 268-285 form a helical membrane-spanning segment; it reads MTWKWIVGPMFLYLCERL. Residues 286–570 are Cytoplasmic-facing; that stretch reads VRFWRSQQKV…VHFIFNKENF (285 aa). Positions 287–397 constitute an FAD-binding FR-type domain; it reads RFWRSQQKVV…DGPFGTASED (111 aa). Glycyl lysine isopeptide (Lys-Gly) (interchain with G-Cter in ubiquitin) cross-links involve residues Lys-294, Lys-299, Lys-306, Lys-328, and Lys-334. Trp-337, His-338, Pro-339, Thr-341, His-354, Arg-356, Trp-361, and Thr-362 together coordinate FAD. Lys-381 is covalently cross-linked (Glycyl lysine isopeptide (Lys-Gly) (interchain with G-Cter in ubiquitin)). Residues Ile-411, Arg-446, and Thr-481 each contribute to the NADPH site. Residue Lys-506 forms a Glycyl lysine isopeptide (Lys-Gly) (interchain with G-Cter in ubiquitin) linkage. Arg-513 contacts NADPH. A Glycyl lysine isopeptide (Lys-Gly) (interchain with G-Cter in ubiquitin) cross-link involves residue Lys-567.

Component of the phagocyte NADPH oxidase core complex/cytochrome b558 complex, composed of CYBB (heavy chain (beta)) and CYBA (light chain (alpha)). Component of the phagocyte NADPH oxidase complex composed of an obligatory core heterodimer formed by the membrane proteins CYBA and CYBB and the cytosolic regulatory subunits NCF1/p47-phox, NCF2/p67-phox, NCF4/p40-phox and the small GTPase RAC1 or RAC2. Interacts with NCF1 (phosphorylated form). Interacts with NCF2; the interaction is enhanced in the presence of GBP7. Interacts with RAC2. Interacts with RAC1. Interacts with calprotectin (S100A8/9). Interacts with NRROS; the interaction is direct and impairs formation of a stable NADPH oxidase complex. Interacts with CYBC1; CYBC1 may act as a chaperone stabilizing Cytochrome b-245 heterodimer. The CYBA:CYBB complex interacts with GBP7. It depends on FAD as a cofactor. Glycosylated. In terms of processing, phosphorylated on Ser and Thr residues by PKC during neutrophils activation. Phosphorylation enhances the NADPH oxidase activity and stimulates its interaction with RAC2, NCF2/p67-phox, and NCF1/p47-phox. Post-translationally, undergoes 'Lys-48'-linked polyubiquitination, likely by RNF145, triggering endoplasmic reticulum-associated degradation.

Its subcellular location is the cell membrane. The enzyme catalyses NADPH + 2 O2 = 2 superoxide + NADP(+) + H(+). Its function is as follows. Catalytic subunit of the phagocyte NADPH oxidase complex that mediates the transfer of electrons from cytosolic NADPH to O2 to produce the superoxide anion (O2(-)). In the activated complex, electrons are first transferred from NADPH to flavin adenine dinucleotide (FAD) and subsequently transferred via two heme molecules to molecular oxygen, producing superoxide through an outer-sphere reaction. Activation of the NADPH oxidase complex is initiated by the assembly of cytosolic subunits of the NADPH oxidase complex with the core NADPH oxidase complex to form a complex at the plasma membrane or phagosomal membrane. This activation process is initiated by phosphorylation dependent binding of the cytosolic NCF1/p47-phox subunit to the C-terminus of CYBA/p22-phox. NADPH oxidase complex assembly is impaired through interaction with NRROS. The protein is NADPH oxidase 2 of Mus musculus (Mouse).